The following is a 175-amino-acid chain: Bifunctional protein PyrR (175 aa).

Positions 97 to 109 match the PRPP-binding motif; that stretch reads IVLIDDVLFTGRT.

The protein belongs to the purine/pyrimidine phosphoribosyltransferase family. PyrR subfamily. As to quaternary structure, homodimer and homohexamer; in equilibrium.

The catalysed reaction is UMP + diphosphate = 5-phospho-alpha-D-ribose 1-diphosphate + uracil. Its function is as follows. Regulates transcriptional attenuation of the pyrimidine nucleotide (pyr) operon by binding in a uridine-dependent manner to specific sites on pyr mRNA. This disrupts an antiterminator hairpin in the RNA and favors formation of a downstream transcription terminator, leading to a reduced expression of downstream genes. Functionally, also displays a weak uracil phosphoribosyltransferase activity which is not physiologically significant. In Leuconostoc citreum (strain KM20), this protein is Bifunctional protein PyrR.